Reading from the N-terminus, the 302-residue chain is Sulfate adenylyltransferase subunit 2 (302 aa).

The protein belongs to the PAPS reductase family. CysD subfamily. As to quaternary structure, heterodimer composed of CysD, the smaller subunit, and CysN.

It catalyses the reaction sulfate + ATP + H(+) = adenosine 5'-phosphosulfate + diphosphate. Its pathway is sulfur metabolism; hydrogen sulfide biosynthesis; sulfite from sulfate: step 1/3. In terms of biological role, with CysN forms the ATP sulfurylase (ATPS) that catalyzes the adenylation of sulfate producing adenosine 5'-phosphosulfate (APS) and diphosphate, the first enzymatic step in sulfur assimilation pathway. APS synthesis involves the formation of a high-energy phosphoric-sulfuric acid anhydride bond driven by GTP hydrolysis by CysN coupled to ATP hydrolysis by CysD. The chain is Sulfate adenylyltransferase subunit 2 from Yersinia enterocolitica serotype O:8 / biotype 1B (strain NCTC 13174 / 8081).